A 245-amino-acid polypeptide reads, in one-letter code: tRNA1(Val) (adenine(37)-N6)-methyltransferase (245 aa).

It belongs to the methyltransferase superfamily. tRNA (adenine-N(6)-)-methyltransferase family.

The protein resides in the cytoplasm. It catalyses the reaction adenosine(37) in tRNA1(Val) + S-adenosyl-L-methionine = N(6)-methyladenosine(37) in tRNA1(Val) + S-adenosyl-L-homocysteine + H(+). Specifically methylates the adenine in position 37 of tRNA(1)(Val) (anticodon cmo5UAC). In Salmonella paratyphi C (strain RKS4594), this protein is tRNA1(Val) (adenine(37)-N6)-methyltransferase.